Consider the following 522-residue polypeptide: Putative lipase ATG15 (522 aa).

The Cytoplasmic segment spans residues 1–5 (MYIPG). The helical; Signal-anchor for type II membrane protein transmembrane segment at 6 to 26 (PLRLSSYLLPFLSSPSPPAQS) threads the bilayer. The Lumenal portion of the chain corresponds to 27 to 522 (SPDTRTISFK…CYKWEFGEWN (496 aa)). N-linked (GlcNAc...) asparagine glycosylation is found at asparagine 48, asparagine 133, asparagine 196, asparagine 220, asparagine 302, and asparagine 309. Catalysis depends on serine 318, which acts as the Charge relay system. The N-linked (GlcNAc...) asparagine glycan is linked to asparagine 361. The interval 481 to 506 (RRGPKRQPGGEDPGWRKHGGVPKPVS) is disordered.

This sequence belongs to the AB hydrolase superfamily. Lipase family. Binds to both phosphatidylinositol (PI) and phosphatidylinositol 3,5-bisphosphate (PIP2).

Its subcellular location is the endoplasmic reticulum membrane. The protein resides in the golgi apparatus membrane. It localises to the endosome. It is found in the multivesicular body membrane. The protein localises to the prevacuolar compartment membrane. The catalysed reaction is a triacylglycerol + H2O = a diacylglycerol + a fatty acid + H(+). Lipase which is essential for lysis of subvacuolar cytoplasm to vacuole targeted bodies and intravacuolar autophagic bodies. Involved in the lysis of intravacuolar multivesicular body (MVB) vesicles. The intravacuolar membrane disintegration by ATG15 is critical to life span extension. This is Putative lipase ATG15 (ATG15) from Cryptococcus neoformans var. neoformans serotype D (strain JEC21 / ATCC MYA-565) (Filobasidiella neoformans).